The following is a 737-amino-acid chain: 1,4-alpha-glucan branching enzyme GlgB (737 aa).

Catalysis depends on aspartate 419, which acts as the Nucleophile. Glutamate 472 serves as the catalytic Proton donor.

It belongs to the glycosyl hydrolase 13 family. GlgB subfamily. As to quaternary structure, monomer.

The catalysed reaction is Transfers a segment of a (1-&gt;4)-alpha-D-glucan chain to a primary hydroxy group in a similar glucan chain.. It functions in the pathway glycan biosynthesis; glycogen biosynthesis. In terms of biological role, catalyzes the formation of the alpha-1,6-glucosidic linkages in glycogen by scission of a 1,4-alpha-linked oligosaccharide from growing alpha-1,4-glucan chains and the subsequent attachment of the oligosaccharide to the alpha-1,6 position. The chain is 1,4-alpha-glucan branching enzyme GlgB from Cellvibrio japonicus (strain Ueda107) (Pseudomonas fluorescens subsp. cellulosa).